The chain runs to 322 residues: Putative nickel/cobalt efflux system HI_1248 (322 aa).

Transmembrane regions (helical) follow at residues 7-27, 54-74, 100-120, 137-157, 228-248, and 294-314; these read GLVL…WFFL, AGTT…LGPG, LSSL…VVVL, TALL…LRAY, IFVL…LAVL, and LIAG…TTIS.

The protein belongs to the NiCoT transporter (TC 2.A.52) family.

It localises to the cell membrane. Its function is as follows. Efflux system for nickel and cobalt. The sequence is that of Putative nickel/cobalt efflux system HI_1248 from Haemophilus influenzae (strain ATCC 51907 / DSM 11121 / KW20 / Rd).